A 582-amino-acid chain; its full sequence is DNA repair and recombination protein radC (582 aa).

A DNA-binding region spans residues 146 to 150 (KRALR). Positions 194 to 204 (KKEPMRVKPSL) are enriched in basic and acidic residues. 3 disordered regions span residues 194-226 (KKEP…NSAA), 310-400 (QIPN…INGQ), and 485-582 (APSG…QHQH). Residues 326-335 (QNQYTNQRQS) are compositionally biased toward polar residues. Residues 516–529 (AAAQNNTAAANRMA) are compositionally biased toward low complexity.

It belongs to the RAD52 family. As to quaternary structure, part of a complex that includes RAD51, RAD52 and RAD59.

The protein localises to the nucleus. In terms of biological role, involved in DNA double-strand break (DSB) repair and recombination. Promotes the annealing of complementary single-stranded DNA and by stimulation of the RAD51 recombinase. This chain is DNA repair and recombination protein radC (radC), found in Emericella nidulans (strain FGSC A4 / ATCC 38163 / CBS 112.46 / NRRL 194 / M139) (Aspergillus nidulans).